We begin with the raw amino-acid sequence, 144 residues long: MFMGEYDHQLDTKGRMIIPSKFRYDLNERFIITRGLDKCLFGYTLDEWQQIEEKMKTLPMTKKDARKFMRMFFSGAVEVELDKQGRINIPQNLRKYANLTKECTVIGVSNRIEIWDRETWNDFYERNLKKSFEDIAEDLIDFDF.

SpoVT-AbrB domains follow at residues 5 to 47 (EYDH…TLDE) and 76 to 119 (AVEV…DRET).

The protein belongs to the MraZ family. In terms of assembly, forms oligomers.

It localises to the cytoplasm. The protein resides in the nucleoid. The chain is Transcriptional regulator MraZ from Staphylococcus aureus.